The primary structure comprises 249 residues: Type III pantothenate kinase (249 aa).

Aspartate 6–lysine 13 contacts ATP. Residues tyrosine 93 and glycine 100–arginine 103 each bind substrate. Aspartate 102 (proton acceptor) is an active-site residue. Aspartate 122 is a K(+) binding site. Residue threonine 125 participates in ATP binding. Position 181 (threonine 181) interacts with substrate.

Belongs to the type III pantothenate kinase family. In terms of assembly, homodimer. It depends on NH4(+) as a cofactor. K(+) serves as cofactor.

The protein localises to the cytoplasm. The enzyme catalyses (R)-pantothenate + ATP = (R)-4'-phosphopantothenate + ADP + H(+). Its pathway is cofactor biosynthesis; coenzyme A biosynthesis; CoA from (R)-pantothenate: step 1/5. Catalyzes the phosphorylation of pantothenate (Pan), the first step in CoA biosynthesis. The sequence is that of Type III pantothenate kinase from Pseudomonas putida (strain W619).